The following is a 161-amino-acid chain: Small heat shock protein hspJ (161 aa).

The sHSP domain occupies 52–161; it reads SKFTSLNPKL…FEKEIKINIE (110 aa).

Belongs to the small heat shock protein (HSP20) family.

The sequence is that of Small heat shock protein hspJ (hspJ) from Dictyostelium discoideum (Social amoeba).